A 441-amino-acid chain; its full sequence is GPI mannosyltransferase 2 (441 aa).

The next 10 helical transmembrane spans lie at 4-24 (MTVL…LILV), 35-55 (ILFG…PGLG), 115-135 (LLAL…IFGG), 143-163 (LCFL…LSAP), 165-185 (GEAL…SSVL), 199-223 (LLAA…GVLF), 249-269 (VIVL…YIAF), 306-326 (YWVV…ALLL), 361-381 (LAII…VQII), and 418-438 (VAVQ…GSFL).

The protein belongs to the PIGV family.

The protein resides in the endoplasmic reticulum membrane. It functions in the pathway glycolipid biosynthesis; glycosylphosphatidylinositol-anchor biosynthesis. Mannosyltransferase involved in glycosylphosphatidylinositol-anchor biosynthesis. Transfers the second mannose to the glycosylphosphatidylinositol during GPI precursor assembly. The protein is GPI mannosyltransferase 2 (gpi18) of Aspergillus fumigatus (strain ATCC MYA-4609 / CBS 101355 / FGSC A1100 / Af293) (Neosartorya fumigata).